The primary structure comprises 176 residues: Dual-action ribosomal maturation protein DarP (176 aa).

The segment covering 1 to 16 (MRLIDPDADLEFDPDS) has biased composition (acidic residues). Residues 1–29 (MRLIDPDADLEFDPDSVYDGPSKSQKKRE) are disordered.

Belongs to the DarP family.

Its subcellular location is the cytoplasm. In terms of biological role, member of a network of 50S ribosomal subunit biogenesis factors which assembles along the 30S-50S interface, preventing incorrect 23S rRNA structures from forming. Promotes peptidyl transferase center (PTC) maturation. The polypeptide is Dual-action ribosomal maturation protein DarP (Thiobacillus denitrificans (strain ATCC 25259 / T1)).